A 983-amino-acid polypeptide reads, in one-letter code: Bifunctional glutamine synthetase adenylyltransferase/adenylyl-removing enzyme (983 aa).

The segment at 1-490 (MDRKSSVTID…AHGQVFYSPV (490 aa)) is adenylyl removase. Positions 496 to 983 (RIPTQDLRMS…RVVDAVFWNQ (488 aa)) are adenylyl transferase.

This sequence belongs to the GlnE family. Mg(2+) is required as a cofactor.

The catalysed reaction is [glutamine synthetase]-O(4)-(5'-adenylyl)-L-tyrosine + phosphate = [glutamine synthetase]-L-tyrosine + ADP. It carries out the reaction [glutamine synthetase]-L-tyrosine + ATP = [glutamine synthetase]-O(4)-(5'-adenylyl)-L-tyrosine + diphosphate. Involved in the regulation of glutamine synthetase GlnA, a key enzyme in the process to assimilate ammonia. When cellular nitrogen levels are high, the C-terminal adenylyl transferase (AT) inactivates GlnA by covalent transfer of an adenylyl group from ATP to specific tyrosine residue of GlnA, thus reducing its activity. Conversely, when nitrogen levels are low, the N-terminal adenylyl removase (AR) activates GlnA by removing the adenylyl group by phosphorolysis, increasing its activity. The regulatory region of GlnE binds the signal transduction protein PII (GlnB) which indicates the nitrogen status of the cell. The chain is Bifunctional glutamine synthetase adenylyltransferase/adenylyl-removing enzyme from Cutibacterium acnes (strain DSM 16379 / KPA171202) (Propionibacterium acnes).